The primary structure comprises 115 residues: U3-lycotoxin-Ls1k (115 aa).

Positions 1 to 20 (MKFELLFGVLLVTLFSYSSA) are cleaved as a signal peptide. Residues 21-44 (EMLDDFDQADEDELLSLIEKEEAR) constitute a propeptide that is removed on maturation. 4 cysteine pairs are disulfide-bonded: C48/C63, C55/C72, C62/C87, and C74/C85.

It belongs to the neurotoxin 19 (CSTX) family. 01 subfamily. Expressed by the venom gland.

It localises to the secreted. This is U3-lycotoxin-Ls1k from Lycosa singoriensis (Wolf spider).